Reading from the N-terminus, the 151-residue chain is Ribosome maturation factor RimP (151 aa).

It belongs to the RimP family.

The protein localises to the cytoplasm. Its function is as follows. Required for maturation of 30S ribosomal subunits. In Photobacterium profundum (strain SS9), this protein is Ribosome maturation factor RimP.